Here is a 591-residue protein sequence, read N- to C-terminus: Pyruvate kinase 2 (591 aa).

Arg-38 contacts substrate. Residues Asn-40, Ser-42, and Asp-72 each contribute to the K(+) site. 40–43 contributes to the ATP binding site; that stretch reads NFSH. Positions 79 and 164 each coordinate ATP. Glu-229 provides a ligand contact to Mg(2+). Residues Gly-252, Asp-253, and Thr-285 each coordinate substrate. Asp-253 contributes to the Mg(2+) binding site.

This sequence belongs to the pyruvate kinase family. It in the C-terminal section; belongs to the PEP-utilizing enzyme family. Homotetramer. Requires Mg(2+) as cofactor. K(+) is required as a cofactor.

The catalysed reaction is pyruvate + ATP = phosphoenolpyruvate + ADP + H(+). It functions in the pathway carbohydrate degradation; glycolysis; pyruvate from D-glyceraldehyde 3-phosphate: step 5/5. This is Pyruvate kinase 2 (pyk2) from Synechocystis sp. (strain ATCC 27184 / PCC 6803 / Kazusa).